Consider the following 782-residue polypeptide: Coiled-coil alpha-helical rod protein 1 (782 aa).

Basic and acidic residues-rich tracts occupy residues 62 to 74 and 208 to 218; these read ERDV…EPGR and ETRRAGEAKEL. Disordered regions lie at residues 62 to 82 and 191 to 218; these read ERDV…WGLE and SSLT…AKEL. Coiled-coil stretches lie at residues 82-314, 344-435, and 498-691; these read EGSQ…ELTR, LMVQ…VVNA, and VADV…QQEG.

The protein resides in the cytoplasm. It localises to the nucleus. May be a regulator of keratinocyte proliferation or differentiation. The polypeptide is Coiled-coil alpha-helical rod protein 1 (CCHCR1) (Pongo pygmaeus (Bornean orangutan)).